The primary structure comprises 431 residues: FAD-dependent monooxygenase nodY1 (431 aa).

A signal peptide spans 1 to 21; that stretch reads MASTGVSVIVVGLGLAGLTTA. FAD is bound by residues glutamate 35 and arginine 110. Residue arginine 188 is part of the active site. Residue aspartate 313 participates in FAD binding.

It belongs to the paxM FAD-dependent monooxygenase family. The cofactor is FAD.

It functions in the pathway secondary metabolite biosynthesis. Functionally, FAD-dependent monooxygenase; part of the gene cluster that mediates the biosynthesis of the indole diterpenes nodulisporic acids (NA). Nodulisporic acid A (NAA) and its chemically modified derivatives are of particular significance because of their highly potent insecticidal activity against blood-feeding arthropods and lack of observable adverse effects on mammals, in particular the tremogenicity associated with the paspaline-derived IDTs is not observed. The geranylgeranyl diphosphate (GGPP) synthase ggs1, localized outside of the cluster, is proposed to catalyze the first step in nodulisporic acid biosynthesis via conversion of farnesyl pyrophosphate and isopentyl pyrophosphate into geranylgeranyl pyrophosphate (GGPP). Condensation of indole-3-glycerol phosphate with GGPP by the prenyl transferase nodC then forms 3-geranylgeranylindole (3-GGI). Epoxidation by the FAD-dependent monooxygenase nodM leads to a single-epoxidized-GGI that is substrate of the terpene cyclase nodB for cyclization to yield emindole SB. The terminal methyl carbon, C28, of emindole SB is then oxidized by the cytochrome P450 monooxygenase nodW to produce nodulisporic acid F (NAF), the pentacyclic core of NAA. NAF is converted to nodulisporic acid E (NAE) via prenylation. This step is probably performed by one of the indole diterpene prenyltransferases nodD1 or nodD2. Several oxidation steps performed by the FAD-linked oxidoreductase nodO and one of the cytochrome P450 monooxygenase nodR, nodX or nodZ further convert NAE to nodulisporic acid D (NAD). NAD is substrate of cytochrome P450 monooxygenase nodJ to produce the precursor of nodulisporic acid C (NAC), converted to NAC by one of the indole diterpene prenyltransferases nodD1 or nodD2. The FAD-dependent monooxygenase nodY2 then oxidizes NAC to nodulisporic acid B (NAB). Finally NAB is converted to NAA by one of the cytochrome P450 monooxygenases nodR, nodX or nodZ. The sequence is that of FAD-dependent monooxygenase nodY1 from Hypoxylon pulicicidum.